The following is a 405-amino-acid chain: Deoxyguanosinetriphosphate triphosphohydrolase-like protein (405 aa).

An HD domain is found at 75–219 (RLTHTIEVAQ…AAVADDIAYN (145 aa)).

It belongs to the dGTPase family. Type 2 subfamily.

The chain is Deoxyguanosinetriphosphate triphosphohydrolase-like protein from Allorhizobium ampelinum (strain ATCC BAA-846 / DSM 112012 / S4) (Agrobacterium vitis (strain S4)).